A 742-amino-acid chain; its full sequence is Conidiogenone synthase (742 aa).

The interval 1–332 (MGETIADVYA…SLCVPRYFKV (332 aa)) is terpene cyclase. A Mg(2+)-binding site is contributed by aspartate 97. Residues aspartate 97, 190-193 (RIVD), asparagine 234, 238-242 (SWDKE), and 328-329 (RY) each bind substrate. The DDXXD 1 signature appears at 97-101 (DDETD). The NSE/DTE motif lies at 234–242 (NDLFSWDKE). The interval 333–742 (ERNPYKDHLE…LRAMEEASQK (410 aa)) is prenyltransferase. 3 residues coordinate isopentenyl diphosphate: lysine 414, arginine 417, and histidine 446. Positions 453 and 457 each coordinate Mg(2+). The DDXXD 2 motif lies at 453-457 (DDIQD). Position 462 (arginine 462) interacts with dimethylallyl diphosphate. Arginine 463 contributes to the isopentenyl diphosphate binding site. The dimethylallyl diphosphate site is built by lysine 539, threonine 540, glutamine 575, asparagine 582, lysine 592, and lysine 602. Positions 701–724 (EAHKSDSAWKVNQRRAWKGSQKNG) are disordered.

This sequence in the N-terminal section; belongs to the terpene synthase family. In the C-terminal section; belongs to the FPP/GGPP synthase family. In terms of assembly, hexamer. Mg(2+) serves as cofactor.

It carries out the reaction isopentenyl diphosphate + (2E,6E)-farnesyl diphosphate = (2E,6E,10E)-geranylgeranyl diphosphate + diphosphate. It participates in secondary metabolite biosynthesis; terpenoid biosynthesis. Functionally, bifunctional terpene synthase; part of the gene cluster that mediates the biosynthesis of conidiogenone, a diterpene known to induce the conidiation. The bifunctional terpene synthase PrDS converts isopentenyl diphosphate (IPP) and dimethylallyl diphosphate (DMAPP) into deoxyconidiogenol. The C-terminal prenyltransferase (PT) domain of PrDS catalyzes formation of GGPP, whereas the N-terminal terpene cyclase (TC) domain catalyzes the cyclization of GGPP into deoxyconidiogenol. The cytochrome P450 monooxygenase PrP450 then catalyzes two rounds of oxidation to furnish conidiogenone. This chain is Conidiogenone synthase, found in Penicillium roqueforti (strain FM164).